The primary structure comprises 258 residues: Dihydroorotate dehydrogenase B (NAD(+)), electron transfer subunit (258 aa).

The region spanning 1 to 101 (MKKAYLTVVS…LGPLGNGYDP (101 aa)) is the FAD-binding FR-type domain. Residues 52-55 (RPIS), 69-71 (IYR), and 76-77 (GT) contribute to the FAD site. Residues cysteine 220, cysteine 225, cysteine 228, and cysteine 243 each contribute to the [2Fe-2S] cluster site.

It belongs to the PyrK family. As to quaternary structure, heterotetramer of 2 PyrK and 2 PyrD type B subunits. The cofactor is [2Fe-2S] cluster. FAD serves as cofactor.

The protein operates within pyrimidine metabolism; UMP biosynthesis via de novo pathway; orotate from (S)-dihydroorotate (NAD(+) route): step 1/1. Responsible for channeling the electrons from the oxidation of dihydroorotate from the FMN redox center in the PyrD type B subunit to the ultimate electron acceptor NAD(+). In Bacillus pumilus (strain SAFR-032), this protein is Dihydroorotate dehydrogenase B (NAD(+)), electron transfer subunit.